We begin with the raw amino-acid sequence, 201 residues long: Protease (201 aa).

Catalysis depends on residues His-55, Asp-72, and Cys-122.

This sequence belongs to the peptidase C5 family. In terms of assembly, interacts with protease cofactor pVI-C; this interaction is necessary for protease activation.

The protein resides in the virion. Its subcellular location is the host nucleus. It catalyses the reaction Cleaves proteins of the adenovirus and its host cell at two consensus sites: -Yaa-Xaa-Gly-Gly-|-Xaa- and -Yaa-Xaa-Gly-Xaa-|-Gly- (in which Yaa is Met, Ile or Leu, and Xaa is any amino acid).. With respect to regulation, requires DNA and protease cofactor for maximal activation. Inside nascent virions, becomes partially activated by binding to the viral DNA, allowing it to cleave the cofactor that binds to the protease and fully activates it. Actin, like the viral protease cofactor, seems to act as a cofactor in the cleavage of cytokeratin 18 and of actin itself. In terms of biological role, cleaves viral precursor proteins (pTP, pIIIa, pVI, pVII, pVIII, and pX) inside newly assembled particles giving rise to mature virions. Protease complexed to its cofactor slides along the viral DNA to specifically locate and cleave the viral precursors. Mature virions have a weakened organization compared to the unmature virions, thereby facilitating subsequent uncoating. Without maturation, the particle lacks infectivity and is unable to uncoat. Late in adenovirus infection, in the cytoplasm, may participate in the cytoskeleton destruction. Cleaves host cell cytoskeletal keratins K7 and K18. The polypeptide is Protease (Bovine adenovirus 4 (BAdV-4)).